We begin with the raw amino-acid sequence, 258 residues long: Glutamate racemase (258 aa).

Residues 12–13 (DS) and 44–45 (YG) contribute to the substrate site. Cys-75 (proton donor/acceptor) is an active-site residue. 76-77 (NT) is a binding site for substrate. Cys-186 (proton donor/acceptor) is an active-site residue. 187–188 (TH) serves as a coordination point for substrate.

The protein belongs to the aspartate/glutamate racemases family.

It catalyses the reaction L-glutamate = D-glutamate. It participates in cell wall biogenesis; peptidoglycan biosynthesis. Provides the (R)-glutamate required for cell wall biosynthesis. This chain is Glutamate racemase, found in Clostridium botulinum (strain Alaska E43 / Type E3).